A 313-amino-acid chain; its full sequence is Acetyl-coenzyme A carboxylase carboxyl transferase subunit alpha (313 aa).

Residues 30-291 (DLDREISDLE…KMALLQELAF (262 aa)) enclose the CoA carboxyltransferase C-terminal domain.

Belongs to the AccA family. In terms of assembly, acetyl-CoA carboxylase is a heterohexamer composed of biotin carboxyl carrier protein (AccB), biotin carboxylase (AccC) and two subunits each of ACCase subunit alpha (AccA) and ACCase subunit beta (AccD).

It localises to the cytoplasm. The enzyme catalyses N(6)-carboxybiotinyl-L-lysyl-[protein] + acetyl-CoA = N(6)-biotinyl-L-lysyl-[protein] + malonyl-CoA. It participates in lipid metabolism; malonyl-CoA biosynthesis; malonyl-CoA from acetyl-CoA: step 1/1. Component of the acetyl coenzyme A carboxylase (ACC) complex. First, biotin carboxylase catalyzes the carboxylation of biotin on its carrier protein (BCCP) and then the CO(2) group is transferred by the carboxyltransferase to acetyl-CoA to form malonyl-CoA. This Zymomonas mobilis subsp. mobilis (strain ATCC 31821 / ZM4 / CP4) protein is Acetyl-coenzyme A carboxylase carboxyl transferase subunit alpha.